The following is a 450-amino-acid chain: Neutral protease 2 homolog AFUB_070680 (450 aa).

An N-terminal signal peptide occupies residues 1–19 (MKITALASAILAVAQGALA). A propeptide spanning residues 20–172 (LPARAPALDI…PASIKPLDRR (153 aa)) is cleaved from the precursor. Disulfide bonds link Cys-179/Cys-251 and Cys-258/Cys-276. His-300 serves as a coordination point for Zn(2+). Glu-301 is a catalytic residue. Positions 304 and 315 each coordinate Zn(2+). Polar residues predominate over residues 364–392 (QPGQTEPGTQTMWDGYSQPGQTEPGTQTM). A disordered region spans residues 364–416 (QPGQTEPGTQTMWDGYSQPGQTEPGTQTMWDGYSQPGQTEPGTQTTWDGYSQP). Residues 398-409 (QPGQTEPGTQTT) are compositionally biased toward low complexity.

This sequence belongs to the peptidase M35 family. The cofactor is Zn(2+).

It localises to the secreted. The catalysed reaction is Preferential cleavage of bonds with hydrophobic residues in P1'. Also 3-Asn-|-Gln-4 and 8-Gly-|-Ser-9 bonds in insulin B chain.. Secreted metalloproteinase that allows assimilation of proteinaceous substrates. Shows high activities on basic nuclear substrates such as histone and protamine. May be involved in virulence. This is Neutral protease 2 homolog AFUB_070680 from Aspergillus fumigatus (strain ATCC MYA-4609 / CBS 101355 / FGSC A1100 / Af293) (Neosartorya fumigata).